The sequence spans 114 residues: Protein lin-52 homolog (114 aa).

Ser26 and Ser51 each carry phosphoserine.

It belongs to the lin-52 family. As to quaternary structure, component of the DREAM complex (also named LINC complex) at least composed of E2F4, E2F5, LIN9, LIN37, LIN52, LIN54, MYBL1, MYBL2, RBL1, RBL2, RBBP4, TFDP1 and TFDP2. The complex exists in quiescent cells where it represses cell cycle-dependent genes. It dissociates in S phase when LIN9, LIN37, LIN52 and LIN54 form a subcomplex that binds to MYBL2.

In Pongo abelii (Sumatran orangutan), this protein is Protein lin-52 homolog (LIN52).